Consider the following 404-residue polypeptide: Photosynthetic reaction center cytochrome c subunit (404 aa).

Residues 1-22 (MSPAQQLTLPAVIVVASVMLLG) form the signal peptide. The N-palmitoyl cysteine moiety is linked to residue Cys-23. Residue Cys-23 is the site of S-diacylglycerol cysteine attachment. Heme is bound by residues Met-94, Cys-107, Cys-110, His-111, Met-130, His-144, Cys-152, Cys-155, His-156, Met-236, Cys-247, Cys-250, His-251, Cys-307, Cys-310, and His-311. Positions 346 to 404 (ASEAAPAAATEAAPEAPAQEVPAAEAVPAAAEPGAAEAAGSVEPAPVEEVAPAPAAQRL) are disordered.

Component of the photosynthetic reaction center composed of protein subunits L (PufL), M (PufM), H (PuhA) and cytochrome C (PufC). The reaction center interacts with light-harvesting antenna complex LH1. Post-translationally, binds 4 heme groups per subunit.

Its subcellular location is the cellular chromatophore membrane. The reaction center of purple bacteria contains a tightly bound cytochrome molecule which re-reduces the photo oxidized primary electron donor. In Thermochromatium tepidum (Chromatium tepidum), this protein is Photosynthetic reaction center cytochrome c subunit.